Reading from the N-terminus, the 2076-residue chain is Protein Ycf2 (2076 aa).

An ATP-binding site is contributed by 1458 to 1465 (GSIGTGRS).

The protein belongs to the Ycf2 family.

The protein resides in the plastid. The protein localises to the chloroplast stroma. Probable ATPase of unknown function. Its presence in a non-photosynthetic plant (Epifagus virginiana) and experiments in tobacco indicate that it has an essential function which is probably not related to photosynthesis. The chain is Protein Ycf2 from Acorus calamus (Sweet flag).